Consider the following 289-residue polypeptide: 4-diphosphocytidyl-2-C-methyl-D-erythritol kinase (289 aa).

The active site involves Lys-11. ATP is bound at residue 96–106; the sequence is PVAAGIGGGSS. The active site involves Asp-138.

This sequence belongs to the GHMP kinase family. IspE subfamily.

It catalyses the reaction 4-CDP-2-C-methyl-D-erythritol + ATP = 4-CDP-2-C-methyl-D-erythritol 2-phosphate + ADP + H(+). Its pathway is isoprenoid biosynthesis; isopentenyl diphosphate biosynthesis via DXP pathway; isopentenyl diphosphate from 1-deoxy-D-xylulose 5-phosphate: step 3/6. In terms of biological role, catalyzes the phosphorylation of the position 2 hydroxy group of 4-diphosphocytidyl-2C-methyl-D-erythritol. The polypeptide is 4-diphosphocytidyl-2-C-methyl-D-erythritol kinase (Azorhizobium caulinodans (strain ATCC 43989 / DSM 5975 / JCM 20966 / LMG 6465 / NBRC 14845 / NCIMB 13405 / ORS 571)).